Consider the following 407-residue polypeptide: Na(+)-translocating NADH-quinone reductase subunit F (407 aa).

Residues 3-23 form a helical membrane-spanning segment; it reads IILGVVMFTLIVLALVLVILF. The 2Fe-2S ferredoxin-type domain occupies 32-126; sequence GDITISINGD…DMDIELPEEI (95 aa). [2Fe-2S] cluster contacts are provided by Cys-69, Cys-75, Cys-78, and Cys-110. The region spanning 129-269 is the FAD-binding FR-type domain; that stretch reads VKKWECTVIS…SGPFGEFFAK (141 aa). The catalytic stretch occupies residues 272–389; sequence DAEMVFIGGG…PMMNAAVIGM (118 aa).

This sequence belongs to the NqrF family. As to quaternary structure, composed of six subunits; NqrA, NqrB, NqrC, NqrD, NqrE and NqrF. Requires [2Fe-2S] cluster as cofactor. The cofactor is FAD.

It is found in the cell inner membrane. The enzyme catalyses a ubiquinone + n Na(+)(in) + NADH + H(+) = a ubiquinol + n Na(+)(out) + NAD(+). In terms of biological role, NQR complex catalyzes the reduction of ubiquinone-1 to ubiquinol by two successive reactions, coupled with the transport of Na(+) ions from the cytoplasm to the periplasm. The first step is catalyzed by NqrF, which accepts electrons from NADH and reduces ubiquinone-1 to ubisemiquinone by a one-electron transfer pathway. The chain is Na(+)-translocating NADH-quinone reductase subunit F from Vibrio anguillarum (Listonella anguillarum).